The sequence spans 351 residues: Anthranilate phosphoribosyltransferase (351 aa).

Residues Gly-92, 95-96 (GD), Thr-100, 102-105 (NIST), 120-128 (KHGNRAASS), and Ser-132 contribute to the 5-phospho-alpha-D-ribose 1-diphosphate site. Gly-92 contacts anthranilate. Residue Ser-104 coordinates Mg(2+). Asn-123 lines the anthranilate pocket. Residue Arg-178 coordinates anthranilate. Mg(2+) contacts are provided by Asp-236 and Glu-237.

This sequence belongs to the anthranilate phosphoribosyltransferase family. As to quaternary structure, homodimer. Mg(2+) serves as cofactor.

The catalysed reaction is N-(5-phospho-beta-D-ribosyl)anthranilate + diphosphate = 5-phospho-alpha-D-ribose 1-diphosphate + anthranilate. The protein operates within amino-acid biosynthesis; L-tryptophan biosynthesis; L-tryptophan from chorismate: step 2/5. Its function is as follows. Catalyzes the transfer of the phosphoribosyl group of 5-phosphorylribose-1-pyrophosphate (PRPP) to anthranilate to yield N-(5'-phosphoribosyl)-anthranilate (PRA). The polypeptide is Anthranilate phosphoribosyltransferase (Deinococcus geothermalis (strain DSM 11300 / CIP 105573 / AG-3a)).